The sequence spans 161 residues: Nucleotide-binding protein Pput_4372 (161 aa).

This sequence belongs to the YajQ family.

Functionally, nucleotide-binding protein. This chain is Nucleotide-binding protein Pput_4372, found in Pseudomonas putida (strain ATCC 700007 / DSM 6899 / JCM 31910 / BCRC 17059 / LMG 24140 / F1).